Here is a 230-residue protein sequence, read N- to C-terminus: MIMADLERIKIEPSWKEVLKEEFTKPYFDSIRESYLQAKSSGAILYPPAPLLFNAFNLTPFDQVKAVILGQDPYHAPHQAMGLCFSVPKGVALPASLRNVYKELERDLGIPPAKHGDLTSWAKQGVFMLNAILSVEQGKAGSHQKFGWQTFTDAAISALSRKKKGVVFLLWGNFAREKRVLIDSTKHTILESAHPSPLAGNRYFGNGHFSKTNEILKVQGEREILWRLPE.

Aspartate 72 functions as the Proton acceptor in the catalytic mechanism.

It belongs to the uracil-DNA glycosylase (UDG) superfamily. UNG family.

Its subcellular location is the cytoplasm. The catalysed reaction is Hydrolyzes single-stranded DNA or mismatched double-stranded DNA and polynucleotides, releasing free uracil.. Its function is as follows. Excises uracil residues from the DNA which can arise as a result of misincorporation of dUMP residues by DNA polymerase or due to deamination of cytosine. The chain is Uracil-DNA glycosylase from Wolinella succinogenes (strain ATCC 29543 / DSM 1740 / CCUG 13145 / JCM 31913 / LMG 7466 / NCTC 11488 / FDC 602W) (Vibrio succinogenes).